We begin with the raw amino-acid sequence, 156 residues long: Protein FAM162A (156 aa).

Residues 37 to 57 form a disordered region; it reads TNGFCSKPQESPKPPDQHTYS. The required for proapoptotic activity stretch occupies residues 78–104; the sequence is RFKKEDEIPETVSFEMLDAAKNKVRVK. Residues 105 to 122 traverse the membrane as a helical segment; the sequence is ISYVMIALTVAGCVLMVI.

Belongs to the UPF0389 family. In terms of assembly, interacts with HSP90AB1; HSP90AB1 is essential for FAM162A mitochondrial localization and pro-apoptotic activity. Interacts with VDAC2; the interaction is probably involved in inducing mitochondrial permeability transition.

It is found in the mitochondrion membrane. Its function is as follows. Proposed to be involved in regulation of apoptosis; the exact mechanism may differ between cell types/tissues. May be involved in hypoxia-induced cell death of transformed cells implicating cytochrome C release and caspase activation (such as CASP9) and inducing mitochondrial permeability transition. May be involved in hypoxia-induced cell death of neuronal cells probably by promoting release of AIFM1 from mitochondria to cytoplasm and its translocation to the nucleus; however, the involvement of caspases has been reported conflictingly. This chain is Protein FAM162A (FAM162A), found in Bos taurus (Bovine).